The sequence spans 410 residues: Dipeptidase 1 (410 aa).

Residues 1–16 (MVIIWWFWSLLAICAS) form the signal peptide. Histidine 36 and aspartate 38 together coordinate Zn(2+). A disulfide bond links cysteine 87 and cysteine 170. Asparagine 121 carries N-linked (GlcNAc...) asparagine glycosylation. Glutamate 141 contacts Zn(2+). Residue histidine 168 participates in substrate binding. Residues histidine 214 and histidine 235 each coordinate Zn(2+). An intrachain disulfide couples cysteine 242 to cysteine 274. A substrate-binding site is contributed by arginine 246. N-linked (GlcNAc...) asparagine glycosylation is present at asparagine 258. Aspartate 304 serves as a coordination point for substrate. A glycan (N-linked (GlcNAc...) asparagine) is linked at asparagine 332. Serine 384 carries the GPI-anchor amidated serine lipid modification. A propeptide spans 385–410 (QAHSIHLQTGALVASLASLLFRLHLL) (removed in mature form).

It belongs to the metallo-dependent hydrolases superfamily. Peptidase M19 family. In terms of assembly, homodimer; disulfide-linked. The cofactor is Zn(2+). In terms of tissue distribution, expressed in heart, lung, skeletal muscle, kidney, liver, and testis. Not detected in brain and spleen.

It is found in the apical cell membrane. Its subcellular location is the cell projection. The protein resides in the microvillus membrane. The enzyme catalyses an L-aminoacyl-L-amino acid + H2O = 2 an L-alpha-amino acid. It catalyses the reaction leukotriene D4 + H2O = leukotriene E4 + glycine. It carries out the reaction L-cystine-bis-glycine + 2 H2O = L-cystine + 2 glycine. The catalysed reaction is a beta-lactam + H2O = a substituted beta-amino acid. The enzyme catalyses glycyldehydrophenylalanine + H2O = 2,3-didehydrophenylalanine + glycine. Inhibited by L-penicillamine. Inhibited by cilastatin. Functionally, hydrolyzes a wide range of dipeptides including the conversion of leukotriene D4 to leukotriene E4. Hydrolyzes cystinyl-bis-glycine (cys-bis-gly) formed during glutathione degradation. Also possesses beta lactamase activity and hydrolytically inactivates beta-lactam antibiotics. Independently of its dipeptidase activity, acts as an adhesion receptor for neutrophil recruitment from bloodstream into inflamed lungs and liver. This is Dipeptidase 1 (Dpep1) from Mus musculus (Mouse).